The sequence spans 144 residues: Prefoldin subunit alpha (144 aa).

It belongs to the prefoldin subunit alpha family. As to quaternary structure, heterohexamer of two alpha and four beta subunits.

It is found in the cytoplasm. Functionally, molecular chaperone capable of stabilizing a range of proteins. Seems to fulfill an ATP-independent, HSP70-like function in archaeal de novo protein folding. The chain is Prefoldin subunit alpha from Methanosarcina barkeri (strain Fusaro / DSM 804).